A 422-amino-acid polypeptide reads, in one-letter code: L-threonine dehydratase biosynthetic IlvA (422 aa).

At Lys56 the chain carries N6-(pyridoxal phosphate)lysine. Pyridoxal 5'-phosphate contacts are provided by residues Asn83, 189–193 (GGGGL), and Ser315. One can recognise an ACT-like domain in the interval 339-413 (HYFILNFPQR…FDPSNIYINE (75 aa)).

It belongs to the serine/threonine dehydratase family. In terms of assembly, homotetramer. Requires pyridoxal 5'-phosphate as cofactor.

It carries out the reaction L-threonine = 2-oxobutanoate + NH4(+). It participates in amino-acid biosynthesis; L-isoleucine biosynthesis; 2-oxobutanoate from L-threonine: step 1/1. In terms of biological role, catalyzes the anaerobic formation of alpha-ketobutyrate and ammonia from threonine in a two-step reaction. The first step involved a dehydration of threonine and a production of enamine intermediates (aminocrotonate), which tautomerizes to its imine form (iminobutyrate). Both intermediates are unstable and short-lived. The second step is the nonenzymatic hydrolysis of the enamine/imine intermediates to form 2-ketobutyrate and free ammonia. In the low water environment of the cell, the second step is accelerated by RidA. The polypeptide is L-threonine dehydratase biosynthetic IlvA (ilvA) (Staphylococcus aureus (strain Mu50 / ATCC 700699)).